A 149-amino-acid polypeptide reads, in one-letter code: 17 kDa major membrane protein (149 aa).

The N-terminal stretch at 1 to 19 is a signal peptide; the sequence is MKKIIKLSLLSLSIAGLAS. A lipid anchor (N-palmitoyl cysteine) is attached at cysteine 20. Cysteine 20 is lipidated: S-diacylglycerol cysteine.

It localises to the cell outer membrane. The protein is 17 kDa major membrane protein of Francisella tularensis subsp. holarctica (strain LVS).